The primary structure comprises 445 residues: UPF0210 protein SZO_15840 (445 aa).

It belongs to the UPF0210 family. In terms of assembly, homodimer.

The protein is UPF0210 protein SZO_15840 of Streptococcus equi subsp. zooepidemicus (strain H70).